The sequence spans 202 residues: MARSRVPAAASPAKLGPLLSRRFFARSVHEVAPELIGATLLVAGVGGLIVEVEAYHHTDPAAHSYGGETPRNRVMFGPPGFAYVYRSYGIHWCVNFVCEAEGSASAVLIRALAPTHGLGVMRKHRGLDDERSLCSGPGKLTQALGITIAHNGAPLDIEPFAIHRRTVEPDIGTGPRIGISKAIELPWRYGLRRSRLVSKPFK.

The protein belongs to the DNA glycosylase MPG family.

This chain is Putative 3-methyladenine DNA glycosylase, found in Rhodopseudomonas palustris (strain BisB5).